We begin with the raw amino-acid sequence, 611 residues long: ATP-dependent zinc metalloprotease FtsH (611 aa).

Methionine 1 is a topological domain (cytoplasmic). A helical transmembrane segment spans residues valine 2–phenylalanine 22. Over asparagine 23 to leucine 98 the chain is Extracellular. Residues phenylalanine 99–phenylalanine 119 form a helical membrane-spanning segment. The Cytoplasmic portion of the chain corresponds to methionine 120–lysine 611. Glycine 192–threonine 199 is a binding site for ATP. Zn(2+) is bound at residue histidine 414. Glutamate 415 is a catalytic residue. The Zn(2+) site is built by histidine 418 and aspartate 492.

The protein in the central section; belongs to the AAA ATPase family. In the C-terminal section; belongs to the peptidase M41 family. In terms of assembly, homohexamer. Zn(2+) is required as a cofactor.

It localises to the cell membrane. Its function is as follows. Acts as a processive, ATP-dependent zinc metallopeptidase for both cytoplasmic and membrane proteins. Plays a role in the quality control of integral membrane proteins. This is ATP-dependent zinc metalloprotease FtsH from Buchnera aphidicola subsp. Acyrthosiphon pisum (strain APS) (Acyrthosiphon pisum symbiotic bacterium).